The chain runs to 376 residues: ATP synthase gamma chain, chloroplastic (376 aa).

A chloroplast-targeting transit peptide spans 1-52 (MSCSNVTMLVSSKPSLPDASNLSFRSAFNPFQLPSQNSSSSCTPSRPTSIQC). Residue Cys133 is part of the active site. Cys250 and Cys256 form a disulfide bridge.

The protein belongs to the ATPase gamma chain family. As to quaternary structure, F-type ATPases have 2 components, CF(1) - the catalytic core - and CF(0) - the membrane proton channel. CF(1) has five subunits: alpha(3), beta(3), gamma(1), delta(1), epsilon(1). CF(0) has four main subunits: a, b, b' and c.

It localises to the plastid. It is found in the chloroplast thylakoid membrane. Functionally, produces ATP from ADP in the presence of a proton gradient across the membrane. The gamma chain is believed to be important in regulating ATPase activity and the flow of protons through the CF(0) complex. The sequence is that of ATP synthase gamma chain, chloroplastic (ATPC) from Pisum sativum (Garden pea).